The following is a 21-amino-acid chain: uncharacterized protein (21 aa).

This is an uncharacterized protein from Methanococcus voltae.